The primary structure comprises 320 residues: ATP-dependent 6-phosphofructokinase (320 aa).

Position 12 (glycine 12) interacts with ATP. 22–26 (RGVVR) provides a ligand contact to ADP. ATP is bound by residues 73–74 (RF) and 103–106 (GDGS). Aspartate 104 provides a ligand contact to Mg(2+). 126–128 (TID) serves as a coordination point for substrate. The Proton acceptor role is filled by aspartate 128. Arginine 155 serves as a coordination point for ADP. Substrate-binding positions include arginine 163 and 170 to 172 (MGR). Residues 186–188 (GCE), lysine 212, and 214–216 (KKH) each bind ADP. Residues glutamate 223, arginine 244, and 250-253 (HIQR) contribute to the substrate site.

The protein belongs to the phosphofructokinase type A (PFKA) family. ATP-dependent PFK group I subfamily. Prokaryotic clade 'B1' sub-subfamily. As to quaternary structure, homotetramer. The cofactor is Mg(2+).

Its subcellular location is the cytoplasm. The enzyme catalyses beta-D-fructose 6-phosphate + ATP = beta-D-fructose 1,6-bisphosphate + ADP + H(+). Its pathway is carbohydrate degradation; glycolysis; D-glyceraldehyde 3-phosphate and glycerone phosphate from D-glucose: step 3/4. Its activity is regulated as follows. Allosterically activated by ADP and other diphosphonucleosides, and allosterically inhibited by phosphoenolpyruvate. Functionally, catalyzes the phosphorylation of D-fructose 6-phosphate to fructose 1,6-bisphosphate by ATP, the first committing step of glycolysis. This chain is ATP-dependent 6-phosphofructokinase, found in Vibrio vulnificus (strain CMCP6).